A 486-amino-acid polypeptide reads, in one-letter code: Ribulose bisphosphate carboxylase large chain 1 (486 aa).

2 residues coordinate substrate: asparagine 125 and threonine 175. The active-site Proton acceptor is lysine 177. Lysine 179 provides a ligand contact to substrate. Mg(2+)-binding residues include lysine 203, aspartate 205, and glutamate 206. Position 203 is an N6-carboxylysine (lysine 203). Histidine 295 (proton acceptor) is an active-site residue. 3 residues coordinate substrate: arginine 296, histidine 328, and serine 380.

This sequence belongs to the RuBisCO large chain family. Type I subfamily. In terms of assembly, heterohexadecamer of 8 large chains and 8 small chains. Mg(2+) serves as cofactor.

It catalyses the reaction 2 (2R)-3-phosphoglycerate + 2 H(+) = D-ribulose 1,5-bisphosphate + CO2 + H2O. The catalysed reaction is D-ribulose 1,5-bisphosphate + O2 = 2-phosphoglycolate + (2R)-3-phosphoglycerate + 2 H(+). RuBisCO catalyzes two reactions: the carboxylation of D-ribulose 1,5-bisphosphate, the primary event in carbon dioxide fixation, as well as the oxidative fragmentation of the pentose substrate. Both reactions occur simultaneously and in competition at the same active site. This Cereibacter sphaeroides (strain ATCC 17025 / ATH 2.4.3) (Rhodobacter sphaeroides) protein is Ribulose bisphosphate carboxylase large chain 1.